An 815-amino-acid polypeptide reads, in one-letter code: Serotype-specific mannosyltransferase WbdA (815 aa).

Residues 1 to 374 (MSRAIIENAG…WANTAHLAID (374 aa)) are alpha-(1-&gt;2)-mannosyltransferase. The tract at residues 431–804 (KLLVDISVLA…WKQSAELLLK (374 aa)) is alpha-(1-&gt;3)-mannosyltransferase.

Belongs to the glycosyltransferase group 1 family. Glycosyltransferase 4 subfamily.

The protein resides in the cell inner membrane. It functions in the pathway bacterial outer membrane biogenesis; LPS O-antigen biosynthesis. Functionally, mannosyltransferase involved in the biosynthesis of the repeat unit of the lipopolysaccharide (LPS) O-antigen region. The protein is Serotype-specific mannosyltransferase WbdA of Escherichia coli.